A 155-amino-acid chain; its full sequence is Ribosomal RNA large subunit methyltransferase H (155 aa).

Residues leucine 72, glycine 104, and 123–128 (LSKMTF) contribute to the S-adenosyl-L-methionine site.

It belongs to the RNA methyltransferase RlmH family. Homodimer.

Its subcellular location is the cytoplasm. It catalyses the reaction pseudouridine(1915) in 23S rRNA + S-adenosyl-L-methionine = N(3)-methylpseudouridine(1915) in 23S rRNA + S-adenosyl-L-homocysteine + H(+). Its function is as follows. Specifically methylates the pseudouridine at position 1915 (m3Psi1915) in 23S rRNA. This Cytophaga hutchinsonii (strain ATCC 33406 / DSM 1761 / CIP 103989 / NBRC 15051 / NCIMB 9469 / D465) protein is Ribosomal RNA large subunit methyltransferase H.